Here is a 309-residue protein sequence, read N- to C-terminus: MSNQKKNDVSSFVKDSLIGGTAGGVSKTIVAPIERVKLLLQVQSASTQIAADKQYKGIVDCFVRVSKEQGVISLWRGNLANVIRYFPTQALNFAFKDKYKKFFVRHTAKENPTKFFIGNLLSGGAAGATSLLFVYPLDFARTRLAADVGTGSARQFTGLGNCISSIYKRDGLIGLYRGFGVSVGGIFVYRAAFFGGYDTAKGILLGENNKKASFWASWGIAQVVTTIAGVVSYPFDTVRRRMMMQAGRADILYSSTWDCWVKIATREGPTAFFKGALSNAIRGSGGALVLVIYDEIQKLMGFEGGVGSE.

3 Solcar repeats span residues 10–102, 114–203, and 216–299; these read SSFV…YKKF, KFFI…AKGI, and ASWG…IQKL. 5 helical membrane-spanning segments follow: residues 12–41, 79–103, 113–133, 181–201, and 215–235; these read FVKDSLIGGTAGGVSKTIVAPIERVKLLLQ, LANVIRYFPTQALNFAFKDKYKKFF, TKFFIGNLLSGGAAGATSLLF, VSVGGIFVYRAAFFGGYDTAK, and WASWGIAQVVTTIAGVVSYPF. ADP-binding residues include R84 and K96. R239 lines the ADP pocket. Residues 239 to 244 are important for transport activity; the sequence is RRRMMM. Positions 239–244 match the Nucleotide carrier signature motif motif; the sequence is RRRMMM. A helical transmembrane segment spans residues 276–293; sequence ALSNAIRGSGGALVLVIY.

The protein belongs to the mitochondrial carrier (TC 2.A.29) family. As to quaternary structure, monomer.

It is found in the mitochondrion inner membrane. The enzyme catalyses ADP(in) + ATP(out) = ADP(out) + ATP(in). With respect to regulation, the matrix-open state (m-state) is inhibited by the membrane-permeable bongkrekic acid (BKA). The cytoplasmic-open state (c-state) is inhibited by the membrane-impermeable toxic inhibitor carboxyatractyloside (CATR). In terms of biological role, ADP:ATP antiporter that mediates import of ADP into the mitochondrial matrix for ATP synthesis, and export of ATP out to fuel the cell. Cycles between the cytoplasmic-open state (c-state) and the matrix-open state (m-state): operates by the alternating access mechanism with a single substrate-binding site intermittently exposed to either the cytosolic (c-state) or matrix (m-state) side of the inner mitochondrial membrane. The polypeptide is Mitochondrial substrate carrier family protein ancA (ancA) (Dictyostelium discoideum (Social amoeba)).